The chain runs to 104 residues: Large ribosomal subunit protein bL21 (104 aa).

Belongs to the bacterial ribosomal protein bL21 family. In terms of assembly, part of the 50S ribosomal subunit. Contacts protein L20.

Its function is as follows. This protein binds to 23S rRNA in the presence of protein L20. The protein is Large ribosomal subunit protein bL21 of Streptococcus pyogenes serotype M1.